The sequence spans 528 residues: Vacuolar fusion protein MON1 homolog (528 aa).

The span at 1–16 (MEVEQTSVRSDTNSTC) shows a compositional bias: polar residues. A disordered region spans residues 1-50 (MEVEQTSVRSDTNSTCEYLDAEGDPESPNLYQEADPDQEAEQQNHSIISE).

The protein belongs to the MON1/SAND family. In terms of assembly, component of the Mon1-Ccz1 guanyl-nucleotide exchange factor complex made up of Mon1, Ccz1 and Bulli; the interaction of Bulli with the Mon1-Ccz1 heterodimer is mediated via the C-terminal Mic1 domain of Bulli. Mon1 and Ccz1 form a stable complex which displays Rab7 GEF activity with or without Bulli; GEF activity is enhanced by Bulli possibly by improving membrane association of the complex. Interacts with Rab5 and Rab7; preferentially binds GTP-bound Rab5 and GDP-bound Rab7.

Its subcellular location is the cytoplasm. It is found in the cytosol. With respect to regulation, the Rab7 guanyl-nucleotide exchange factor (GEF) activity of the Mon1-Ccz1 complex is autoinhibited by the N-terminal disordered region of Mon1. GEF activity is stimulated by Rab5-mediated recruitment to membranes. Functionally, part of the Mon1-Ccz1 guanyl-nucleotide exchange factor complex specific for Rab7 that promotes the exchange of GDP to GTP, converting Rab7 from an inactive GDP-bound form into an active GTP-bound form. Plays an important role in membrane trafficking through the secretory apparatus. Required for recruitment of Rab7 to endosomal and autophagosomal membranes to mediate endolysosomal and autolysosomal vesicle maturation. Required for fusion of multivesicular bodies and lysosomes but not their formation or trafficking. Involved in the replacement of Rab5 (and possibly Rab4) with Rab7, also known as Rab conversion or the Rab cascade, during endosomal maturation. The Mon1-Ccz1 complex is recruited to phosphatidylinositol 3-phosphate (PtdIns[3]P) enriched membranes by Rab5, which stimulates recruitment and guanyl-nucleotide exchange of Rab7. Together with Rab7 required for autolysosome formation in fat cells and autophagic degradation during starvation-induced basal and developmental autophagy. Involved in neuromuscular junction (NMJ) presynaptic bouton function and morphogenesis. Together with Rab7, regulates levels of postsynaptic glutamate receptor GluRIIA in the NMJ presynapse. This chain is Vacuolar fusion protein MON1 homolog, found in Drosophila melanogaster (Fruit fly).